A 549-amino-acid polypeptide reads, in one-letter code: MEADFVIIGSGSAGSAMAYRLSEDGRYSVIVIEYGVPDVGPLIQMPAALSFPMNMETYDWGFSSEPEPHIGGRSLVTPRGKVLGGSSSINGMVYVRGHACDFDHWSQSGARGWAYADVLPYFKRMENSQGGQEGWRGTNGPLYVQRGKRDNPLFHAFVEAGHQAGFEVADDYNGEKQEGFGPMEQTIHNGRRWSAANAYLKPALKRPNVKLVKGFARKIVLEGKRAVGVEIEAGRTFSTIRARREVIIAASSINSPKLLMLSGIGPAAHLKEHGIDLVADRPGVGQNLQDHLEVYIQQECTQPITLYSELNLFSKARIGVEWLLFKTGDGATNHFESAAFVRSKAGVEYPDIQYHFLPVAIRYDGKAAAQSHGFQAHVGPMRSKSRGSVTLRSANPREKPVIKFNYMSHEDDWADFRHCVRLTREIFGQAAFDPYRGAEIQPGAHVQTDDEIDNFIREHVESAFHPCGTCKMGAVDDPMAVVDPECRVIGVEGLRVADSSIFPRITNGNLNGPSIMVGEKASDHILGRTPLARSNQEPWINPRWQVSDR.

Position 4-33 (4-33) interacts with FAD; that stretch reads DFVIIGSGSAGSAMAYRLSEDGRYSVIVIE. Catalysis depends on histidine 465, which acts as the Proton acceptor.

The protein belongs to the GMC oxidoreductase family. The cofactor is FAD.

It catalyses the reaction choline + A = betaine aldehyde + AH2. The catalysed reaction is betaine aldehyde + NAD(+) + H2O = glycine betaine + NADH + 2 H(+). It functions in the pathway amine and polyamine biosynthesis; betaine biosynthesis via choline pathway; betaine aldehyde from choline (cytochrome c reductase route): step 1/1. Involved in the biosynthesis of the osmoprotectant glycine betaine. Catalyzes the oxidation of choline to betaine aldehyde and betaine aldehyde to glycine betaine at the same rate. This Brucella canis (strain ATCC 23365 / NCTC 10854 / RM-666) protein is Oxygen-dependent choline dehydrogenase.